The chain runs to 193 residues: Holliday junction branch migration complex subunit RuvA (193 aa).

A domain I region spans residues 1–64 (MIGRIQGTLV…EDAQQLFGFA (64 aa)). The tract at residues 65-139 (TETEREAFRQ…GKLAPDLGVA (75 aa)) is domain II. The tract at residues 139–143 (AGGKP) is flexible linker. The domain III stretch occupies residues 144–193 (QAIETSSEVLQALLALGYSEKEALLALKQIPADTSISDGIRMGLKYLSKA).

The protein belongs to the RuvA family. As to quaternary structure, homotetramer. Forms an RuvA(8)-RuvB(12)-Holliday junction (HJ) complex. HJ DNA is sandwiched between 2 RuvA tetramers; dsDNA enters through RuvA and exits via RuvB. An RuvB hexamer assembles on each DNA strand where it exits the tetramer. Each RuvB hexamer is contacted by two RuvA subunits (via domain III) on 2 adjacent RuvB subunits; this complex drives branch migration. In the full resolvosome a probable DNA-RuvA(4)-RuvB(12)-RuvC(2) complex forms which resolves the HJ.

It is found in the cytoplasm. The RuvA-RuvB-RuvC complex processes Holliday junction (HJ) DNA during genetic recombination and DNA repair, while the RuvA-RuvB complex plays an important role in the rescue of blocked DNA replication forks via replication fork reversal (RFR). RuvA specifically binds to HJ cruciform DNA, conferring on it an open structure. The RuvB hexamer acts as an ATP-dependent pump, pulling dsDNA into and through the RuvAB complex. HJ branch migration allows RuvC to scan DNA until it finds its consensus sequence, where it cleaves and resolves the cruciform DNA. The protein is Holliday junction branch migration complex subunit RuvA of Polynucleobacter necessarius subsp. necessarius (strain STIR1).